The sequence spans 275 residues: MTLQQQIIKALGAKPQINAEEEIRRSVDFLKSYLQTYPFIKSLVLGISGGQDSTLAGKLCQMAINELRLETGNESLQFIAVRLPYGVQADEQDCQDAIAFIQPDRVLTVNIKGAVLASEQALREAGIELSDFVRGNEKARERMKAQYSIAGMTSGVVVGTDHAAEAITGFFTKYGDGGTDINPLYRLNKRQGKQLLAALACPEHLYKKAPTADLEDDRPSLPDEVALGVTYDNIDDYLEGKNVPQQVARTIENWYLKTEHKRRPPITVFDDFWKK.

46–53 contacts ATP; that stretch reads GISGGQDS. D52 provides a ligand contact to Mg(2+). R140 lines the deamido-NAD(+) pocket. An ATP-binding site is contributed by T160. E165 lines the Mg(2+) pocket. Positions 173 and 180 each coordinate deamido-NAD(+). ATP contacts are provided by K189 and T211. 260 to 261 contacts deamido-NAD(+); sequence HK.

This sequence belongs to the NAD synthetase family. Homodimer.

The enzyme catalyses deamido-NAD(+) + NH4(+) + ATP = AMP + diphosphate + NAD(+) + H(+). It participates in cofactor biosynthesis; NAD(+) biosynthesis; NAD(+) from deamido-NAD(+) (ammonia route): step 1/1. Catalyzes the ATP-dependent amidation of deamido-NAD to form NAD. Uses ammonia as a nitrogen source. The protein is NH(3)-dependent NAD(+) synthetase of Escherichia coli (strain K12 / MC4100 / BW2952).